The following is a 1011-amino-acid chain: Vacuolar membrane protease (1011 aa).

At 1 to 9 (MSNPFAFRS) the chain is on the cytoplasmic side. The chain crosses the membrane as a helical span at residues 10–30 (AQVTFWTTVVYLALLVPLVVI). The Vacuolar portion of the chain corresponds to 31–378 (NEGVPPVQPD…TFVLFGLRGM (348 aa)). 2 N-linked (GlcNAc...) asparagine glycosylation sites follow: asparagine 50 and asparagine 106. 2 residues coordinate Zn(2+): histidine 159 and aspartate 171. Glutamate 205 serves as the catalytic Proton acceptor. The Zn(2+) site is built by glutamate 206, glutamate 231, and histidine 304. Asparagine 331 is a glycosylation site (N-linked (GlcNAc...) asparagine). A helical membrane pass occupies residues 379-399 (FAWSLTVLIVGPLTLFGMMYL). The Cytoplasmic portion of the chain corresponds to 400–439 (VHKQGKGYAFHTKLRATSDSSSEDGDDEDGEVIRLGGWKG). The helical transmembrane segment at 440-460 (FFRFPFALIVAGALVTGAALL) threads the bilayer. Topologically, residues 461–471 (LRKMNPFIIYS) are vacuolar. The helical transmembrane segment at 472-492 (SEYAVWAMMISLFYFGFWLIM) threads the bilayer. The Cytoplasmic segment spans residues 493–505 (RGSSYTRPSALHR). A helical transmembrane segment spans residues 506-526 (LYVHIWLFILGWVALVFATVL). The Vacuolar portion of the chain corresponds to 527-536 (EDRMRIASGY). Residues 537 to 557 (IFVFWESQVFLATLVAVCELF) traverse the membrane as a helical segment. Residues 558–682 (SLPRKIDFAR…WSGPMVTSTW (125 aa)) lie on the Cytoplasmic side of the membrane. The span at 595-609 (EATSPQRAGQSSNSP) shows a compositional bias: polar residues. 2 disordered regions span residues 595–627 (EATS…LFRK) and 650–671 (IMDS…EGEQ). Positions 610 to 622 (QEDDEDDVPDEET) are enriched in acidic residues. Residues 683–703 (ILQFLLLGPFMVILGGQVGLL) traverse the membrane as a helical segment. Residues 704-719 (LTSAVNQTGVDGSSLL) lie on the Vacuolar side of the membrane. The N-linked (GlcNAc...) asparagine glycan is linked to asparagine 709. Residues 720–740 (APYLMIAALSAILLMPLSPFI) form a helical membrane-spanning segment. Residues 741-747 (HRVTKHV) are Cytoplasmic-facing. A helical transmembrane segment spans residues 748–768 (PLFLLAVAFATLIYSLVAFPF). The Vacuolar segment spans residues 769 to 1011 (SPRAPYKTFF…LVEGSKAFKV (243 aa)). Asparagine 872 carries N-linked (GlcNAc...) asparagine glycosylation.

The protein belongs to the peptidase M28 family. Zn(2+) serves as cofactor.

The protein localises to the vacuole membrane. May be involved in vacuolar sorting and osmoregulation. The protein is Vacuolar membrane protease of Pyricularia oryzae (strain 70-15 / ATCC MYA-4617 / FGSC 8958) (Rice blast fungus).